The chain runs to 181 residues: Protoporphyrinogen IX dehydrogenase [quinone] (181 aa).

The 170-residue stretch at 3–172 (TLILFSTRDG…QVANFAREIA (170 aa)) folds into the Flavodoxin-like domain. FMN is bound by residues 9-13 (TRDGQ) and 84-152 (FYSV…ETDT).

The protein belongs to the HemG family. It depends on FMN as a cofactor.

The protein localises to the cell inner membrane. The catalysed reaction is protoporphyrinogen IX + 3 a menaquinone = protoporphyrin IX + 3 a menaquinol. The enzyme catalyses protoporphyrinogen IX + 3 a ubiquinone = protoporphyrin IX + 3 a ubiquinol. It carries out the reaction protoporphyrinogen IX + 3 a quinone = protoporphyrin IX + 3 a quinol. The protein operates within porphyrin-containing compound metabolism; protoporphyrin-IX biosynthesis; protoporphyrin-IX from protoporphyrinogen-IX: step 1/1. Functionally, catalyzes the 6-electron oxidation of protoporphyrinogen IX to form protoporphyrin IX; under anaerobic conditions uses menaquinone as an electron acceptor, under aerobic condition uses ubiquinone as an electron acceptor. The chain is Protoporphyrinogen IX dehydrogenase [quinone] from Escherichia coli O157:H7.